A 313-amino-acid polypeptide reads, in one-letter code: Tyrosine recombinase slr0733 (313 aa).

In terms of domain architecture, Core-binding (CB) spans 7-101 (NNLSGLNQNI…AIKSLVNYAR (95 aa)). The Tyr recombinase domain occupies 122–307 (RDTTGVSPTS…RHQHQAQITD (186 aa)). Active-site residues include arginine 162, lysine 188, histidine 258, arginine 261, and histidine 285. Tyrosine 294 (O-(3'-phospho-DNA)-tyrosine intermediate) is an active-site residue.

The protein belongs to the 'phage' integrase family.

It is found in the cytoplasm. Functionally, site-specific tyrosine recombinase, which acts by catalyzing the cutting and rejoining of the recombining DNA molecules. This chain is Tyrosine recombinase slr0733, found in Synechocystis sp. (strain ATCC 27184 / PCC 6803 / Kazusa).